The chain runs to 911 residues: DNA polymerase I (911 aa).

In terms of domain architecture, 5'-3' exonuclease spans 186-280 (VTPAQYPDLA…DTLRLQPWDR (95 aa)). The 178-residue stretch at 320–497 (RGGLLESGTV…LAAALDAELD (178 aa)) folds into the 3'-5' exonuclease domain.

The protein belongs to the DNA polymerase type-A family. In terms of assembly, single-chain monomer with multiple functions.

It carries out the reaction DNA(n) + a 2'-deoxyribonucleoside 5'-triphosphate = DNA(n+1) + diphosphate. In terms of biological role, in addition to polymerase activity, this DNA polymerase exhibits 3'-5' and 5'-3' exonuclease activity. This Mycobacterium leprae (strain TN) protein is DNA polymerase I (polA).